A 532-amino-acid polypeptide reads, in one-letter code: MGKKVAIIGAGVSGLASIRSCLEEGLEPTCFEKSNDIGGLWKFSDHAEEGRASIYKSVFSNSSKEMMCFPDFPFPDDFPNFMHNSKIQEYIIAFAKEKNLLKYIQFKTFVSSVNKHPDFATTGQWDVTTERDGKKESAVFDAVMVCSGHHVYPNLPKESFPGLNHFKGKCFHSRDYKEPGVFNGKRVLVVGLGNSGCDIATELSRTAEQVMISSRSGSWVMSRVWDNGYPWDMLLVTRFGTFLKNNLPTAISDWLYVKQMNARFKHENYGLMPLNGVLRKEPVFNDELPASILCGIVSVKPNVKEFTETSAIFEDGTIFEGIDCVIFATGYSFAYPFLDESIIKSRNNEIILFKGVFPPLLEKSTIAVIGFVQSLGAAIPTVDLQSRWAAQVIKGTCTLPSMEDMMNDINEKMEKKRKWFGKSETIQTDYIVYMDELSSFIGAKPNIPWLFLTDPKLAMEVYFGPCSPYQFRLVGPGQWPGARNAILTQWDRSLKPMQTRVVGRLQKPCFFFHWLKLFAIPILLIAVFLVLT.

FAD is bound by residues 9–13, E32, 40–41, and 61–62; these read GAGVS, LW, and NS. Residues 60 to 61 and 195 to 198 each bind NADP(+); these read SN and SGCD. S401 carries the phosphoserine modification. The chain crosses the membrane as a helical span at residues 510-530; it reads FFFHWLKLFAIPILLIAVFLV.

The protein belongs to the FMO family. The cofactor is FAD. In terms of tissue distribution, liver.

The protein localises to the microsome membrane. It is found in the endoplasmic reticulum membrane. The enzyme catalyses trimethylamine + NADPH + O2 = trimethylamine N-oxide + NADP(+) + H2O. The catalysed reaction is N,N-dimethylaniline + NADPH + O2 + H(+) = N,N-dimethylaniline N-oxide + NADP(+) + H2O. It catalyses the reaction hypotaurine + NADPH + O2 + H(+) = taurine + NADP(+) + H2O. It carries out the reaction (S)-nicotine + NADPH + O2 = trans-(S)-nicotine N(1')-oxide + NADP(+) + H2O. The enzyme catalyses albendazole + NADPH + O2 + H(+) = albendazole S-oxide + NADP(+) + H2O. Essential hepatic enzyme that catalyzes the oxygenation of a wide variety of nitrogen- and sulfur-containing compounds including drugs as well as dietary compounds. Plays an important role in the metabolism of trimethylamine (TMA), via the production of trimethylamine N-oxide (TMAO) metabolite. TMA is generated by the action of gut microbiota using dietary precursors such as choline, choline containing compounds, betaine or L-carnitine. By regulating TMAO concentration, FMO3 directly impacts both platelet responsiveness and rate of thrombus formation. This Homo sapiens (Human) protein is Flavin-containing monooxygenase 3 (FMO3).